Here is a 43-residue protein sequence, read N- to C-terminus: Cytochrome b559 subunit beta (43 aa).

Residues 18-34 traverse the membrane as a helical segment; it reads WLSVHALGIPTIFFLGA. His22 provides a ligand contact to heme.

Belongs to the PsbE/PsbF family. Heterodimer of an alpha subunit and a beta subunit. PSII is composed of 1 copy each of membrane proteins PsbA, PsbB, PsbC, PsbD, PsbE, PsbF, PsbH, PsbI, PsbJ, PsbK, PsbL, PsbM, PsbT, PsbX, PsbY, PsbZ, Psb30/Ycf12, at least 3 peripheral proteins of the oxygen-evolving complex and a large number of cofactors. It forms dimeric complexes. The cofactor is heme b.

It is found in the plastid. The protein resides in the chloroplast thylakoid membrane. This b-type cytochrome is tightly associated with the reaction center of photosystem II (PSII). PSII is a light-driven water:plastoquinone oxidoreductase that uses light energy to abstract electrons from H(2)O, generating O(2) and a proton gradient subsequently used for ATP formation. It consists of a core antenna complex that captures photons, and an electron transfer chain that converts photonic excitation into a charge separation. The chain is Cytochrome b559 subunit beta from Stigeoclonium helveticum (Green alga).